We begin with the raw amino-acid sequence, 392 residues long: MKKAYYGDFGGQFLPESAMFALNELEGAFLKFSKDKLFKKELNELLKTYVGRPTPLYFARNLSKKYQHEIYLKREDLNHTGAHKINNAIAQALLAKKMGKKKIIAETGAGQHGLATATAAALLGLECEIYMGATDVQRQALNVYKMELLGAKIHAVQSGLKTLKEATTAAIQAWVGDIKNIFYVVGSAVGPYPYPKMVMHFQSIIGKECKMQLQKLNKKVDYIIAAVGGGSNAAGIFYDFIKDENVKLIGIEAGGLGIDTPYHAATLNKGKTGIIHGMKTKVLQDDLGNILPVHSVSAGLDYPGIGPLHAFLFESKRAQYHAISDEECMQALKLLCKEEGIIAAIESSHALAFLEKLCPTLKKKSVIVVNLSGRGDKDMQMIRDYKKGVIYG.

Lysine 84 carries the N6-(pyridoxal phosphate)lysine modification.

Belongs to the TrpB family. In terms of assembly, tetramer of two alpha and two beta chains. The cofactor is pyridoxal 5'-phosphate.

The enzyme catalyses (1S,2R)-1-C-(indol-3-yl)glycerol 3-phosphate + L-serine = D-glyceraldehyde 3-phosphate + L-tryptophan + H2O. It participates in amino-acid biosynthesis; L-tryptophan biosynthesis; L-tryptophan from chorismate: step 5/5. The beta subunit is responsible for the synthesis of L-tryptophan from indole and L-serine. The chain is Tryptophan synthase beta chain from Campylobacter jejuni subsp. jejuni serotype O:6 (strain 81116 / NCTC 11828).